The chain runs to 522 residues: Semenogelin-2 (522 aa).

A signal peptide spans 1-23 (MKSIILFVLSLLLILEKQAAVMG). 4 disordered regions span residues 26–62 (CGSK…SKGS), 132–158 (GGQA…ISSQ), 272–358 (NLNQ…ERHL), and 379–522 (EEQI…PVST). 2 stretches are compositionally biased toward polar residues: residues 31-40 (QLPSGSSQFP) and 137-158 (RGTQ…ISSQ). Basic and acidic residues predominate over residues 292–310 (RTEERQLNRGEKSVQKDVS). Residues 325 to 335 (KSQNQVTIHSQ) are compositionally biased toward polar residues. A compositionally biased stretch (basic and acidic residues) spans 336 to 345 (GQEHGHKENK). Polar residues-rich tracts occupy residues 379 to 397 (EEQI…SQAQ), 427 to 436 (KDVSQSSTSF), and 446 to 464 (SQIQ…QNAK). 2 stretches are compositionally biased toward basic and acidic residues: residues 465–492 (GKSD…ESSE) and 499–522 (TEHE…PVST).

Belongs to the semenogelin family. In terms of assembly, interacts with SERPINA5.

The protein localises to the secreted. In terms of biological role, participates in the formation of a gel matrix (sperm coagulum) entrapping the accessory gland secretions and ejaculated spermatozoa. The sequence is that of Semenogelin-2 (SEMG2) from Hylobates klossii (Kloss's gibbon).